Reading from the N-terminus, the 375-residue chain is Trichodiene synthase (375 aa).

This sequence belongs to the trichodiene synthase family.

It catalyses the reaction (2E,6E)-farnesyl diphosphate = trichodiene + diphosphate. It functions in the pathway sesquiterpene biosynthesis; trichothecene biosynthesis. TS is a member of the terpene cyclase group of enzymes. It catalyzes the isomerization and cyclization of farnesyl pyro-phosphate to form trichodiene, the first cyclic intermediate in the biosynthetic pathway for trichothecenes. It serves to branch trichothecene biosynthesis from the isoprenoid pathway. The polypeptide is Trichodiene synthase (TRI5) (Fusarium mesoamericanum).